The primary structure comprises 152 residues: MEDSGFNIKYAKLFIKRAEEDLEVAKVLLKTNHYPDSVYHSQQCVEKAVKAVLILNGIIFRRHVVSGVFRNVIYEMKIEDSWKEKLLNLIPKIESLEEHWVMPRYPEPYFGELWNPLEEYTKEDAEECLKDAENVLEVIKDFLKEKYGLKQI.

The 121-residue stretch at 15–135 folds into the HEPN domain; the sequence is IKRAEEDLEV…EECLKDAENV (121 aa).

In terms of biological role, putative toxin component of a putative type VII toxin-antitoxin (TA) system. Its cognate antitoxin might be MJ1305. This chain is Putative toxin MJ1304, found in Methanocaldococcus jannaschii (strain ATCC 43067 / DSM 2661 / JAL-1 / JCM 10045 / NBRC 100440) (Methanococcus jannaschii).